Consider the following 786-residue polypeptide: LPS-assembly protein LptD (786 aa).

An N-terminal signal peptide occupies residues 1–24 (MKKRIPTLLATMIASALYSHQGLA). Intrachain disulfides connect Cys31–Cys726 and Cys173–Cys727.

It belongs to the LptD family. Component of the lipopolysaccharide transport and assembly complex. Interacts with LptE and LptA. In terms of processing, contains two intramolecular disulfide bonds.

Its subcellular location is the cell outer membrane. In terms of biological role, together with LptE, is involved in the assembly of lipopolysaccharide (LPS) at the surface of the outer membrane. The sequence is that of LPS-assembly protein LptD from Salmonella choleraesuis (strain SC-B67).